We begin with the raw amino-acid sequence, 582 residues long: tRNA-guanine(15) transglycosylase (582 aa).

Aspartate 95 acts as the Nucleophile in catalysis. The substrate site is built by aspartate 130 and glycine 196. Zn(2+) is bound by residues cysteine 279, cysteine 281, and cysteine 284. A PUA domain is found at 507-582 (RMRVVVNKEA…RAVKVRKGVE (76 aa)).

Belongs to the archaeosine tRNA-ribosyltransferase family. As to quaternary structure, homodimer. It depends on Zn(2+) as a cofactor.

The enzyme catalyses guanosine(15) in tRNA + 7-cyano-7-deazaguanine = 7-cyano-7-carbaguanosine(15) in tRNA + guanine. It functions in the pathway tRNA modification; archaeosine-tRNA biosynthesis. In terms of biological role, exchanges the guanine residue with 7-cyano-7-deazaguanine (preQ0) at position 15 in the dihydrouridine loop (D-loop) of archaeal tRNAs. This is tRNA-guanine(15) transglycosylase (tgtA) from Pyrococcus horikoshii (strain ATCC 700860 / DSM 12428 / JCM 9974 / NBRC 100139 / OT-3).